Consider the following 1225-residue polypeptide: Mediator of RNA polymerase II transcription subunit 13 (1225 aa).

It belongs to the Mediator complex subunit 13 family. Component of the srb8-11 complex which consists of rb8, srb9(TRAP240), srb10 and srb11. The srb8-11 complex associates with the Mediator complex thereby blocking association with RNA polymerase II and leading to reduced transcriptional activation by Mediator.

It localises to the nucleus. Component of the srb8-11 complex. The srb8-11 complex is a regulatory module of the Mediator complex which is itself involved in regulation of basal and activated RNA polymerase II-dependent transcription. The srb8-11 complex may be involved in the transcriptional repression of a subset of genes regulated by Mediator. It may inhibit the association of the Mediator complex with RNA polymerase II to form the holoenzyme complex. This Schizosaccharomyces pombe (strain 972 / ATCC 24843) (Fission yeast) protein is Mediator of RNA polymerase II transcription subunit 13 (srb9).